The chain runs to 248 residues: Ribonuclease PH (248 aa).

Phosphate is bound by residues Arg93 and 131 to 133 (GTR).

It belongs to the RNase PH family. In terms of assembly, homohexameric ring arranged as a trimer of dimers.

It carries out the reaction tRNA(n+1) + phosphate = tRNA(n) + a ribonucleoside 5'-diphosphate. Its function is as follows. Phosphorolytic 3'-5' exoribonuclease that plays an important role in tRNA 3'-end maturation. Removes nucleotide residues following the 3'-CCA terminus of tRNAs; can also add nucleotides to the ends of RNA molecules by using nucleoside diphosphates as substrates, but this may not be physiologically important. Probably plays a role in initiation of 16S rRNA degradation (leading to ribosome degradation) during starvation. This Bifidobacterium longum (strain NCC 2705) protein is Ribonuclease PH.